A 133-amino-acid chain; its full sequence is Lymphocyte antigen 6 complex locus protein G6d (133 aa).

An N-terminal signal peptide occupies residues 1 to 19 (MKPQFVGILLSSLLGAALG). Residues 22–116 (MRCYNCGGSP…ASHVAPAGIL (95 aa)) form the UPAR/Ly6 domain. Cysteine 27 and cysteine 35 are oxidised to a cystine. Residues threonine 40 and threonine 41 are each glycosylated (O-linked (GalNAc...) threonine). Cystine bridges form between cysteine 42–cysteine 71 and cysteine 77–cysteine 96. Serine 104 carries the GPI-anchor amidated serine lipid modification. Residues 105–133 (AVASHVAPAGILAAAATALTCLLPGLWSG) constitute a propeptide, removed in mature form.

Homodimer. Post-translationally, O-glycosylated. As to expression, expressed in the adult lung, and in fetal liver, lung, kidney, brain and spleen.

It localises to the cell membrane. Its subcellular location is the cell projection. The protein localises to the filopodium. The sequence is that of Lymphocyte antigen 6 complex locus protein G6d (LY6G6D) from Homo sapiens (Human).